Reading from the N-terminus, the 308-residue chain is N-acetylmuramic acid 6-phosphate etherase (308 aa).

The SIS domain maps to 59 to 222; it reads TAERLRHGGR…STGVMVKLGK (164 aa). The active-site Proton donor is Glu-87. Residue Glu-118 is part of the active site.

This sequence belongs to the GCKR-like family. MurNAc-6-P etherase subfamily. Homodimer.

It carries out the reaction N-acetyl-D-muramate 6-phosphate + H2O = N-acetyl-D-glucosamine 6-phosphate + (R)-lactate. It functions in the pathway amino-sugar metabolism; N-acetylmuramate degradation. Specifically catalyzes the cleavage of the D-lactyl ether substituent of MurNAc 6-phosphate, producing GlcNAc 6-phosphate and D-lactate. This is N-acetylmuramic acid 6-phosphate etherase from Nostoc punctiforme (strain ATCC 29133 / PCC 73102).